The following is a 253-amino-acid chain: Transcriptional regulatory protein TcrA (253 aa).

One can recognise a Response regulatory domain in the interval 24 to 138 (RILVVEDEPK…ELFARLRALS (115 aa)). At D73 the chain carries 4-aspartylphosphate. Residues 146–244 (PPTLEAGDLR…IRGAGYRLRK (99 aa)) constitute a DNA-binding region (ompR/PhoB-type).

In terms of assembly, interacts with HK2. In terms of processing, phosphorylated by HK2.

Its subcellular location is the cytoplasm. Member of the three-protein two-component system HK1/HK2/TcrA. This chain is Transcriptional regulatory protein TcrA (tcrA), found in Mycobacterium tuberculosis (strain ATCC 25618 / H37Rv).